A 725-amino-acid polypeptide reads, in one-letter code: Exocyst complex component 8 (725 aa).

A Phosphoserine modification is found at S19. Residues 137-159 are disordered; the sequence is AGFFSTPGGASRDGSGPGEEGKQ. At T142 the chain carries Phosphothreonine. One can recognise a PH domain in the interval 182–282; the sequence is YLVYNGDLVE…WLEVLEDTKR (101 aa). The disordered stretch occupies residues 285-328; the sequence is SEKRRREQEEAAAPRGPPQVTSKATNPFEDDEEEEPAVPEVEEE. Positions 312–328 are enriched in acidic residues; sequence FEDDEEEEPAVPEVEEE.

Belongs to the EXO84 family. The exocyst complex is composed of EXOC1, EXOC2, EXOC3, EXOC4, EXOC5, EXOC6, EXOC7 and EXOC8. Interacts (via PH domain) with GTP-bound RALA and RALB. Interacts with SH3BP1; required for the localization of both SH3BP1 and the exocyst to the leading edge of migrating cells.

Its subcellular location is the cytoplasm. It is found in the perinuclear region. The protein localises to the cell projection. It localises to the growth cone. In terms of biological role, component of the exocyst complex involved in the docking of exocytic vesicles with fusion sites on the plasma membrane. This Homo sapiens (Human) protein is Exocyst complex component 8 (EXOC8).